Reading from the N-terminus, the 216-residue chain is Thymidine kinase (216 aa).

ATP is bound by residues 9–16 (GTMDCGKS) and 86–89 (DEAQ). Catalysis depends on Glu-87, which acts as the Proton acceptor.

Belongs to the thymidine kinase family. As to quaternary structure, homotetramer.

The protein localises to the cytoplasm. It catalyses the reaction thymidine + ATP = dTMP + ADP + H(+). This chain is Thymidine kinase, found in Streptomyces coelicolor (strain ATCC BAA-471 / A3(2) / M145).